Consider the following 475-residue polypeptide: Ribulose bisphosphate carboxylase large chain (475 aa).

Positions 1-2 (MS) are excised as a propeptide. P3 is modified (N-acetylproline). An N6,N6,N6-trimethyllysine modification is found at K14. Positions 123 and 173 each coordinate substrate. The active-site Proton acceptor is the K175. K177 is a binding site for substrate. Mg(2+)-binding residues include K201, D203, and E204. K201 bears the N6-carboxylysine mark. H294 serves as the catalytic Proton acceptor. 3 residues coordinate substrate: R295, H327, and S379.

Belongs to the RuBisCO large chain family. Type I subfamily. Heterohexadecamer of 8 large chains and 8 small chains; disulfide-linked. The disulfide link is formed within the large subunit homodimers. The cofactor is Mg(2+). Post-translationally, the disulfide bond which can form in the large chain dimeric partners within the hexadecamer appears to be associated with oxidative stress and protein turnover.

The protein resides in the plastid. Its subcellular location is the chloroplast. The catalysed reaction is 2 (2R)-3-phosphoglycerate + 2 H(+) = D-ribulose 1,5-bisphosphate + CO2 + H2O. The enzyme catalyses D-ribulose 1,5-bisphosphate + O2 = 2-phosphoglycolate + (2R)-3-phosphoglycerate + 2 H(+). In terms of biological role, ruBisCO catalyzes two reactions: the carboxylation of D-ribulose 1,5-bisphosphate, the primary event in carbon dioxide fixation, as well as the oxidative fragmentation of the pentose substrate in the photorespiration process. Both reactions occur simultaneously and in competition at the same active site. In Angiopteris lygodiifolia (Turnip fern), this protein is Ribulose bisphosphate carboxylase large chain.